The following is a 245-amino-acid chain: NAD-dependent protein deacetylase (245 aa).

In terms of domain architecture, Deacetylase sirtuin-type spans 1–245; that stretch reads MIFVQQFEEV…EFVEGLSSIK (245 aa). NAD(+) is bound by residues A26, T30, F37, R38, Q105, I107, D108, and H123. F37 contacts nicotinamide. Positions 107 and 108 each coordinate nicotinamide. Residue H123 is the Proton acceptor of the active site. C131, C134, C151, and C154 together coordinate Zn(2+). Residues T190, S191, N216, and I234 each coordinate NAD(+).

The protein belongs to the sirtuin family. Class U subfamily. Zn(2+) serves as cofactor.

The protein localises to the cytoplasm. It carries out the reaction N(6)-acetyl-L-lysyl-[protein] + NAD(+) + H2O = 2''-O-acetyl-ADP-D-ribose + nicotinamide + L-lysyl-[protein]. Functionally, NAD-dependent protein deacetylase which modulates the activities of several enzymes which are inactive in their acetylated form. This chain is NAD-dependent protein deacetylase, found in Bacillus thuringiensis subsp. konkukian (strain 97-27).